The sequence spans 362 residues: D-alanine--D-alanine ligase (362 aa).

Residues 141 to 346 enclose the ATP-grasp domain; sequence KNIFAEAGLN…YPELIEELIR (206 aa). 174–229 is an ATP binding site; the sequence is EEALGYPCFVKPANLGSSVGINKCKDREELEKAFEEAFQFDRKIIVEENIIGREVE. Mg(2+) contacts are provided by Asp-300, Glu-313, and Asn-315.

This sequence belongs to the D-alanine--D-alanine ligase family. The cofactor is Mg(2+). Mn(2+) serves as cofactor.

Its subcellular location is the cytoplasm. It catalyses the reaction 2 D-alanine + ATP = D-alanyl-D-alanine + ADP + phosphate + H(+). Its pathway is cell wall biogenesis; peptidoglycan biosynthesis. In terms of biological role, cell wall formation. This is D-alanine--D-alanine ligase from Bacillus cytotoxicus (strain DSM 22905 / CIP 110041 / 391-98 / NVH 391-98).